Consider the following 239-residue polypeptide: tRNA (guanine-N(7)-)-methyltransferase (239 aa).

S-adenosyl-L-methionine-binding residues include E68, E93, D120, and D143. D143 is a catalytic residue. Substrate-binding positions include K147, D180, and 217 to 220 (TKFE).

This sequence belongs to the class I-like SAM-binding methyltransferase superfamily. TrmB family.

It catalyses the reaction guanosine(46) in tRNA + S-adenosyl-L-methionine = N(7)-methylguanosine(46) in tRNA + S-adenosyl-L-homocysteine. It functions in the pathway tRNA modification; N(7)-methylguanine-tRNA biosynthesis. Catalyzes the formation of N(7)-methylguanine at position 46 (m7G46) in tRNA. The sequence is that of tRNA (guanine-N(7)-)-methyltransferase from Vibrio cholerae serotype O1 (strain ATCC 39541 / Classical Ogawa 395 / O395).